A 363-amino-acid chain; its full sequence is Chorismate synthase (363 aa).

The NADP(+) site is built by Arg48 and Arg54. FMN contacts are provided by residues 125–127, 237–238, Gly277, 292–296, and Arg318; these read RSS, NA, and KPTSS.

The protein belongs to the chorismate synthase family. Homotetramer. FMNH2 serves as cofactor.

The catalysed reaction is 5-O-(1-carboxyvinyl)-3-phosphoshikimate = chorismate + phosphate. Its pathway is metabolic intermediate biosynthesis; chorismate biosynthesis; chorismate from D-erythrose 4-phosphate and phosphoenolpyruvate: step 7/7. Catalyzes the anti-1,4-elimination of the C-3 phosphate and the C-6 proR hydrogen from 5-enolpyruvylshikimate-3-phosphate (EPSP) to yield chorismate, which is the branch point compound that serves as the starting substrate for the three terminal pathways of aromatic amino acid biosynthesis. This reaction introduces a second double bond into the aromatic ring system. This chain is Chorismate synthase, found in Pseudomonas entomophila (strain L48).